A 263-amino-acid chain; its full sequence is 3-methyl-2-oxobutanoate hydroxymethyltransferase (263 aa).

Mg(2+) contacts are provided by Asp-46 and Asp-85. 3-methyl-2-oxobutanoate is bound by residues 46–47, Asp-85, and Lys-115; that span reads DS. Glu-117 is a Mg(2+) binding site. The Proton acceptor role is filled by Glu-180.

This sequence belongs to the PanB family. In terms of assembly, homodecamer; pentamer of dimers. It depends on Mg(2+) as a cofactor.

Its subcellular location is the cytoplasm. It carries out the reaction 3-methyl-2-oxobutanoate + (6R)-5,10-methylene-5,6,7,8-tetrahydrofolate + H2O = 2-dehydropantoate + (6S)-5,6,7,8-tetrahydrofolate. It participates in cofactor biosynthesis; (R)-pantothenate biosynthesis; (R)-pantoate from 3-methyl-2-oxobutanoate: step 1/2. Catalyzes the reversible reaction in which hydroxymethyl group from 5,10-methylenetetrahydrofolate is transferred onto alpha-ketoisovalerate to form ketopantoate. The chain is 3-methyl-2-oxobutanoate hydroxymethyltransferase from Corynebacterium diphtheriae (strain ATCC 700971 / NCTC 13129 / Biotype gravis).